The sequence spans 550 residues: Membrane-bound alkaline phosphatase (550 aa).

The first 39 residues, 1–39 (MSTWWLVVVAAAAAAGLVRAEDRYHPERLAAGEASAATR), serve as a signal peptide directing secretion. Residue D83 participates in Mg(2+) binding. Residue D83 participates in Zn(2+) binding. The Phosphoserine intermediate role is filled by S133. Residues H196, S198, and E356 each contribute to the Mg(2+) site. The Zn(2+) site is built by D361, H365, D402, H403, and H479. S524 carries GPI-anchor amidated serine lipidation. Positions 525–550 (AATVPTAALLSLLLAAFITLRHQCFL) are cleaved as a propeptide — removed in mature form.

The protein belongs to the alkaline phosphatase family. Mg(2+) is required as a cofactor. It depends on Zn(2+) as a cofactor. As to expression, midgut.

The protein resides in the cell membrane. It carries out the reaction a phosphate monoester + H2O = an alcohol + phosphate. The sequence is that of Membrane-bound alkaline phosphatase (Alp-m) from Bombyx mori (Silk moth).